We begin with the raw amino-acid sequence, 182 residues long: MSEEVGAKRWYAVHTYSGYENKVKKNLEKRVESMNMTEQIFRVVIPEEEETQVKDGKAKKLVKKTFPGYVLVELIMTDESWYVVRNTPGVTGFVGSAGAGSKPNPLLPEEVRFILKQMGLKEKTIDVELDVGEQVRIQSGPFANQIGEVQEIEADKFKLTVLVDMFGRETPVEVEFDQIEKL.

A KOW domain is found at 131 to 163 (VGEQVRIQSGPFANQIGEVQEIEADKFKLTVLV).

The protein belongs to the NusG family.

Functionally, participates in transcription elongation, termination and antitermination. The polypeptide is Transcription termination/antitermination protein NusG (Staphylococcus epidermidis (strain ATCC 35984 / DSM 28319 / BCRC 17069 / CCUG 31568 / BM 3577 / RP62A)).